Here is a 448-residue protein sequence, read N- to C-terminus: Carbamoyl phosphate synthase arginine-specific small chain (448 aa).

A mitochondrion-targeting transit peptide spans 1–27; it reads MFKNIARLASMARSAPRTTASFQTRFM. The 192-residue stretch at 224–415 folds into the Glutamine amidotransferase type-1 domain; that stretch reads HIAVIDCGVK…LGQVHQYRAA (192 aa). Residue C304 is the Nucleophile of the active site. Active-site residues include H388 and E390.

The protein belongs to the CarA family. Heterodimer composed of 2 chains; the small (or glutamine) chain promotes the hydrolysis of glutamine to ammonia, which is used by the large (or ammonia) chain to synthesize carbamoyl phosphate.

It localises to the mitochondrion matrix. It catalyses the reaction hydrogencarbonate + L-glutamine + 2 ATP + H2O = carbamoyl phosphate + L-glutamate + 2 ADP + phosphate + 2 H(+). The catalysed reaction is L-glutamine + H2O = L-glutamate + NH4(+). Its pathway is amino-acid biosynthesis; L-arginine biosynthesis; carbamoyl phosphate from bicarbonate: step 1/1. Small subunit of the arginine-specific carbamoyl phosphate synthase (CPSase). CPSase catalyzes the formation of carbamoyl phosphate from the ammonia moiety of glutamine, carbonate, and phosphate donated by ATP, the first step of the arginine biosynthetic pathway. The small subunit (glutamine amidotransferase) binds and cleaves glutamine to supply the large subunit with the substrate ammonia. The sequence is that of Carbamoyl phosphate synthase arginine-specific small chain (CPA1) from Yarrowia lipolytica (strain CLIB 122 / E 150) (Yeast).